The sequence spans 302 residues: 4-hydroxy-tetrahydrodipicolinate synthase (302 aa).

Residue Thr-55 coordinates pyruvate. The Proton donor/acceptor role is filled by Tyr-144. Catalysis depends on Lys-172, which acts as the Schiff-base intermediate with substrate. A pyruvate-binding site is contributed by Val-214.

It belongs to the DapA family. As to quaternary structure, homotetramer; dimer of dimers.

Its subcellular location is the cytoplasm. The enzyme catalyses L-aspartate 4-semialdehyde + pyruvate = (2S,4S)-4-hydroxy-2,3,4,5-tetrahydrodipicolinate + H2O + H(+). The protein operates within amino-acid biosynthesis; L-lysine biosynthesis via DAP pathway; (S)-tetrahydrodipicolinate from L-aspartate: step 3/4. In terms of biological role, catalyzes the condensation of (S)-aspartate-beta-semialdehyde [(S)-ASA] and pyruvate to 4-hydroxy-tetrahydrodipicolinate (HTPA). The protein is 4-hydroxy-tetrahydrodipicolinate synthase of Synechococcus sp. (strain CC9311).